The sequence spans 203 residues: A-type ATP synthase subunit E (203 aa).

It belongs to the V-ATPase E subunit family. Has multiple subunits with at least A(3), B(3), C, D, E, F, H, I and proteolipid K(x).

It localises to the cell membrane. Component of the A-type ATP synthase that produces ATP from ADP in the presence of a proton gradient across the membrane. This is A-type ATP synthase subunit E from Methanococcus maripaludis (strain C6 / ATCC BAA-1332).